The primary structure comprises 102 residues: Large ribosomal subunit protein uL24 (102 aa).

The protein belongs to the universal ribosomal protein uL24 family. In terms of assembly, part of the 50S ribosomal subunit.

Functionally, one of two assembly initiator proteins, it binds directly to the 5'-end of the 23S rRNA, where it nucleates assembly of the 50S subunit. One of the proteins that surrounds the polypeptide exit tunnel on the outside of the subunit. The sequence is that of Large ribosomal subunit protein uL24 from Leuconostoc mesenteroides subsp. mesenteroides (strain ATCC 8293 / DSM 20343 / BCRC 11652 / CCM 1803 / JCM 6124 / NCDO 523 / NBRC 100496 / NCIMB 8023 / NCTC 12954 / NRRL B-1118 / 37Y).